Consider the following 337-residue polypeptide: Diacylglycerol O-acyltransferase 2-like protein 6 (337 aa).

Transmembrane regions (helical) follow at residues 22–42 (IPVYVLLGTLSILGMPYLLLF) and 102–122 (YIILSHPHGILSYGAFINFAT).

This sequence belongs to the diacylglycerol acyltransferase family.

It is found in the endoplasmic reticulum membrane. It carries out the reaction 1,2-di-(9Z-octadecenoyl)-sn-glycerol + (9Z)-octadecenoyl-CoA = 1,2,3-tri-(9Z-octadecenoyl)-glycerol + CoA. Its function is as follows. Diglyceride acyltransferase that uses fatty acyl-CoA as substrate. Particularly active with oleate as a substrate. Has no wax synthase activity to produce wax esters. The sequence is that of Diacylglycerol O-acyltransferase 2-like protein 6 (Dgat2l6) from Mus musculus (Mouse).